A 280-amino-acid chain; its full sequence is Pyrethroid hydrolase (280 aa).

Catalysis depends on charge relay system residues aspartate 202 and histidine 230. The disordered stretch occupies residues 254-280 (YRQTATKAGPDRPAGADGGRADRADLP).

Belongs to the AB hydrolase superfamily. As to quaternary structure, monomer.

It catalyses the reaction (-)-trans-permethrin + H2O = (3-phenoxyphenyl)methanol + (1S,3R)-3-(2,2-dichlorovinyl)-2,2-dimethylcyclopropanecarboxylate + H(+). In terms of biological role, catalyzes the hydrolysis of pyrethroids pesticides. Catalyzes the hydrolysis of cypermethrin to equimolar amounts of cyano-3-phenoxybenzyl alcohol and 2,2-dimethyl-3-(2,2-dichlorovinyl)-cyclopropanecarboxylic acid. Hydrolyzes cis-permethrin at approximately equal rate to trans-permethrin. This chain is Pyrethroid hydrolase (pytH), found in Sphingobium wenxiniae (strain DSM 21828 / CGMCC 1.7748 / JZ-1).